The chain runs to 379 residues: MATAGKVIKCKAAVAWEAGKPLSIEEVEVAPPQAMEVRVKILYTALCHTDVYFWEAKGQTPVFPRILGHEAGGIVESVGEGVTELAPGDHVLPVFTGECKECDHCKSEESNMCDLLRINVDRGVMIGDGKSRFTIKGKPIFHFVGTSTFSEYTVIHVGCLAKINPEAPLDKVCILSCGFSTGFGATVNVAKPKKGQTVAIFGLGAVGLAAMEGARLSGASRIIGVDLNPAKFEQAKKFGCTDFVNPKDHSKPVHEVLIEMTNGGLDRAVECTGNINAMISCFECVHDGWGVAVLVGVPTKDDVFKTHPMNFLNEKTLKGTFFGNYKPRTDLPNVVELYMKKELELEKFITHSVPFSEINTAFDLMLKGESLRCVMRMDE.

Zn(2+) contacts are provided by C47, T49, H69, C99, C102, C105, C113, and C177. 2 residues coordinate an alcohol: T49 and H69. T49 is an NAD(+) binding site. NAD(+) is bound by residues 202 to 207 (GLGAVG), D226, K231, T272, V295, 295 to 297 (VGV), F322, and R372.

The protein belongs to the zinc-containing alcohol dehydrogenase family. In terms of assembly, homodimer. Zn(2+) is required as a cofactor.

It localises to the cytoplasm. It carries out the reaction a primary alcohol + NAD(+) = an aldehyde + NADH + H(+). It catalyses the reaction a secondary alcohol + NAD(+) = a ketone + NADH + H(+). The chain is Alcohol dehydrogenase 2 (ADH2) from Oryza sativa subsp. indica (Rice).